The following is a 444-amino-acid chain: MAERKYFGTDGVRGKVGSYPITPDFVLKLGWAAGKVLATQGTGKVLIGKDTRISGYMLESALEAGLAAAGLSAAFTGPMPTPAIAYLTRTFRSEAGIVISASHNPFYDNGIKFFSAQGTKLPDDVEEAIEAMLEQPMDCVESAKLGRASRINDAAGRYIEFCKSTFPAHLSLDKYKIVVDCANGATYHIAPNVMRELGAEVIEIGTQPDGMNINENCGATDIKALQNKVLETKADIGLAYDGDGDRLIMVDHFGNKVDGDQILFIIAREALRSGNLKGGVVGTLMSNMSLELALKQLGIPFVRANVGDRYVLEKMQEYNWILGGENSGHIIIADKNTTGDGVIASLAVLAAMVQHKLSLNELASAVKLFPQVLINVRFAGGANPLESDAVKAVATEVEKQLAGKGRILLRKSGTEPLIRVMVECEDAELAQLSAEKIAEAVRSN.

Ser102 functions as the Phosphoserine intermediate in the catalytic mechanism. Positions 102, 241, 243, and 245 each coordinate Mg(2+). A Phosphoserine modification is found at Ser102.

This sequence belongs to the phosphohexose mutase family. It depends on Mg(2+) as a cofactor. Activated by phosphorylation.

It catalyses the reaction alpha-D-glucosamine 1-phosphate = D-glucosamine 6-phosphate. Its function is as follows. Catalyzes the conversion of glucosamine-6-phosphate to glucosamine-1-phosphate. The protein is Phosphoglucosamine mutase of Histophilus somni (strain 129Pt) (Haemophilus somnus).